We begin with the raw amino-acid sequence, 853 residues long: DNA mismatch repair protein MutS (853 aa).

Position 613-620 (613-620) interacts with ATP; sequence GPNMGGKS.

The protein belongs to the DNA mismatch repair MutS family.

Functionally, this protein is involved in the repair of mismatches in DNA. It is possible that it carries out the mismatch recognition step. This protein has a weak ATPase activity. This chain is DNA mismatch repair protein MutS, found in Vibrio atlanticus (strain LGP32) (Vibrio splendidus (strain Mel32)).